We begin with the raw amino-acid sequence, 89 residues long: Large ribosomal subunit protein bL27 (89 aa).

Positions 1-22 (MAHKKAGGSSRNGRDSAGRRLG) are disordered.

It belongs to the bacterial ribosomal protein bL27 family.

This chain is Large ribosomal subunit protein bL27, found in Dinoroseobacter shibae (strain DSM 16493 / NCIMB 14021 / DFL 12).